The following is a 526-amino-acid chain: Peptide chain release factor 3 (526 aa).

Residues 9–277 (DLRRTFAIIS…GLTKWAPKPL (269 aa)) enclose the tr-type G domain. GTP contacts are provided by residues 18–25 (SHPDAGKT), 86–90 (DTPGH), and 140–143 (NKMD).

The protein belongs to the TRAFAC class translation factor GTPase superfamily. Classic translation factor GTPase family. PrfC subfamily.

The protein localises to the cytoplasm. In terms of biological role, increases the formation of ribosomal termination complexes and stimulates activities of RF-1 and RF-2. It binds guanine nucleotides and has strong preference for UGA stop codons. It may interact directly with the ribosome. The stimulation of RF-1 and RF-2 is significantly reduced by GTP and GDP, but not by GMP. The chain is Peptide chain release factor 3 from Colwellia psychrerythraea (strain 34H / ATCC BAA-681) (Vibrio psychroerythus).